The following is a 586-amino-acid chain: MVTHRQRYREKVSQMVSWGHWFALFNILLATLLGSRYLFVADWPTTLAGRIYSYLSIVGHFSFLVFATYLLILFPLTFIVMSQRLMRFLSAILATAGMTLLLIDSEVFTRFHLHLNPIVWELVINPDQNEMARDWQLMFISVPVILLIEMLFATWSWQKLRSLTRRRHFARPLAAFFFVSFIASHLIYIWADANFYRPITMQRANLPLSYPMTARRFLEKHGLLDAQEYQRRLVEQGNPEAVSVQYPLSNLHYRDMGTGQNVLLITVDGLNYSRFEKQMPELATFAEQNIDFTRHMSSGNTTDNGIFGLFYGISPGYMDGVLSTRTPAALITALNQQGYQLGLFSSDGFASPLYRQALLSDFSMPAAQTQSDAQTASQWIDWLGRYAQEDNRWFSWISFNGTNIDDSNQKNFVKRYASAASDVDAQINRVLNALREAGKFDNTVVIITAGRGIPLTPEENRFDWSQGHLQVPLVIHWPGTPAQRINVLTDHTDVMTTLMQRLLHVSTPANEYSQGQDIFTVPRRHNWVTAADGSTLAITTPQMTLVLNNNGHYQTYDLHGEKIKDQKPQLSLLLQVLTEEKRFIAN.

At 1-20 the chain is on the cytoplasmic side; it reads MVTHRQRYREKVSQMVSWGH. A helical membrane pass occupies residues 21 to 43; it reads WFALFNILLATLLGSRYLFVADW. Residues 44 to 57 are Periplasmic-facing; it reads PTTLAGRIYSYLSI. The helical transmembrane segment at 58-80 threads the bilayer; it reads VGHFSFLVFATYLLILFPLTFIV. Residues 81 to 84 are Cytoplasmic-facing; the sequence is MSQR. The helical transmembrane segment at 85–103 threads the bilayer; it reads LMRFLSAILATAGMTLLLI. At 104 to 134 the chain is on the periplasmic side; sequence DSEVFTRFHLHLNPIVWELVINPDQNEMARD. The chain crosses the membrane as a helical span at residues 135-157; the sequence is WQLMFISVPVILLIEMLFATWSW. The Cytoplasmic portion of the chain corresponds to 158-168; the sequence is QKLRSLTRRRH. A helical transmembrane segment spans residues 169–191; the sequence is FARPLAAFFFVSFIASHLIYIWA. The Periplasmic portion of the chain corresponds to 192–586; the sequence is DANFYRPITM…LTEEKRFIAN (395 aa).

It to H.influenzae HI_0842.

It localises to the cell inner membrane. The sequence is that of Inner membrane protein YejM (yejM) from Salmonella typhimurium (strain LT2 / SGSC1412 / ATCC 700720).